Reading from the N-terminus, the 147-residue chain is uncharacterized protein (147 aa).

One can recognise an HTH LytTR-type domain in the interval leucine 44–isoleucine 147.

Its subcellular location is the cytoplasm. This is an uncharacterized protein from Staphylococcus aureus (strain MW2).